The following is a 637-amino-acid chain: Delta(14)-sterol reductase LBR (637 aa).

In terms of domain architecture, Tudor spans 1-62; the sequence is MPNRKYADGE…DIRLQSSFKQ (62 aa). Topologically, residues 1–205 are nuclear; the sequence is MPNRKYADGE…KTKELEFGGR (205 aa). Residues 57–73 are compositionally biased toward low complexity; that stretch reads QSSFKQRKSQSSSSSPS. The disordered stretch occupies residues 57-151; the sequence is QSSFKQRKSQ…SKLLEQQKLK (95 aa). Basic residues predominate over residues 74-97; the sequence is RRSRSRSRSRSPGRPAKGRRRSSS. Residues serine 95 and serine 96 each carry the phosphoserine; by PKA modification. Composition is skewed to basic and acidic residues over residues 98 to 110 and 124 to 151; these read HSREHKEDKKKII and NTRRYNGEPDSTERNDTSSKLLEQQKLK. 8 consecutive transmembrane segments (helical) span residues 206-226, 250-270, 288-309, 317-338, 378-399, 403-425, 466-486, and 554-574; these read FGTFMLMFFLPATVLYLVLMC, VFGVFLLWFFFQALFYLLPIG, INGFYAFLLTAAAIGTLLYFQF, HFVQFAVSAAAFSMALSIYLYI, YFCELRPGLIGWVVINLAMLLA, IHNQSMPSLSMILVNSFQLLYVV, FYLVGHPIAISWPVAAAITIL, and PCGFNHILPYFYVIYFICLLV.

Belongs to the ERG4/ERG24 family. As to quaternary structure, interacts with DNA. Interaction with DNA is sequence independent with higher affinity for supercoiled and relaxed circular DNA than linear DNA.

The protein resides in the nucleus inner membrane. Its subcellular location is the nucleus. It localises to the cytoplasm. The protein localises to the endoplasmic reticulum membrane. It carries out the reaction 5alpha-cholest-8,14-dien-3beta-ol + NADPH + H(+) = 5alpha-cholest-8-en-3beta-ol + NADP(+). The enzyme catalyses 4,4-dimethyl-5alpha-cholesta-8,24-dien-3beta-ol + NADP(+) = 4,4-dimethyl-5alpha-cholesta-8,14,24-trien-3beta-ol + NADPH + H(+). It catalyses the reaction 4,4-dimethyl-8,14-cholestadien-3beta-ol + NADPH + H(+) = 4,4-dimethyl-5alpha-cholest-8-en-3beta-ol + NADP(+). The protein operates within steroid biosynthesis; cholesterol biosynthesis. In terms of biological role, catalyzes the reduction of the C14-unsaturated bond of lanosterol, as part of the metabolic pathway leading to cholesterol biosynthesis. Anchors the lamina and the heterochromatin to the inner nuclear membrane. The protein is Delta(14)-sterol reductase LBR (LBR) of Gallus gallus (Chicken).